The primary structure comprises 616 residues: Protein RIK (616 aa).

Residues 1–11 (MTEDRAHKVAD) are compositionally biased toward basic and acidic residues. The interval 1–32 (MTEDRAHKVADEPAASGRQSPERKKRKWDQPA) is disordered. The region spanning 198 to 304 (GTTSESISVP…AKVLAENLLD (107 aa)) is the KH domain. Composition is skewed to polar residues over residues 432 to 449 (TQAV…TKGN), 475 to 484 (TESQNSQQGS), and 491 to 502 (LDSSGNIGSSSI). Disordered stretches follow at residues 432 to 455 (TQAV…LDAE) and 467 to 616 (LPVS…HTCV). A compositionally biased stretch (pro residues) spans 534–564 (LPPPLKSMLPLPPRSMPPPPPKSMPPPPPKF). Composition is skewed to basic and acidic residues over residues 565–575 (PSDEFLSRNEN) and 598–610 (SERR…EEKN).

In terms of assembly, interacts with RS2. As to expression, expressed in vegetative tissues. More abundant in apices and young leaf primordia than in fully expanded leaf tissues.

The protein resides in the nucleus. This chain is Protein RIK, found in Zea mays (Maize).